The following is a 550-amino-acid chain: Acetyl-coenzyme A transporter 1 (550 aa).

At 1–74 (MSPTISHKDN…KRSYRAELSS (74 aa)) the chain is on the cytoplasmic side. Phosphoserine is present on Ser-42. Residues 75 to 95 (ILLLLFLYVLQGIPLGLAGSI) form a helical membrane-spanning segment. At 96 to 113 (PLILQSKNVSYTDQAFFS) the chain is on the extracellular side. Asn-103 carries N-linked (GlcNAc...) asparagine glycosylation. A helical membrane pass occupies residues 114-134 (FVFWPFSLKLLWAPLVDAVYF). Topologically, residues 135–141 (KNFGRRK) are cytoplasmic. The chain crosses the membrane as a helical span at residues 142–162 (SWLVPTQYILGIFMIYLSTQV). The Extracellular segment spans residues 163-256 (DRLLGNIDGR…FQPQPRGIVT (94 aa)). A helical transmembrane segment spans residues 257-277 (LSDFLFFWGTVFLITTTLVAL). Topologically, residues 278 to 300 (LKKETREASVVKEETQGITDTYK) are cytoplasmic. Residues 301–321 (LLFSIIKMPAVLAFCLLILTS) traverse the membrane as a helical segment. The Extracellular portion of the chain corresponds to 322–344 (KIGFSAADAVTGLKLVEEGVPKE). A helical transmembrane segment spans residues 345 to 365 (HLALLAVPMVPLQIILPLLIS). At 366-375 (KYTAGPQPLN) the chain is on the cytoplasmic side. Residues 376-396 (IFYKAMPYRLLLGLEYALLVW) form a helical membrane-spanning segment. The Extracellular portion of the chain corresponds to 397–405 (WTPKVEHQG). The chain crosses the membrane as a helical span at residues 406 to 426 (GFPIYYYIIVLLSYALHQVTL). Residues 427–509 (YSMYVSIMAF…LGGSCVTALD (83 aa)) are Cytoplasmic-facing. The helical transmembrane segment at 510-530 (GYYVESIVCVLIGFGWWFFLG) threads the bilayer. Topologically, residues 531–550 (PKFKKLQDEGPSSWKCKRTN) are extracellular.

The protein belongs to the SLC33A transporter family. In terms of assembly, homodimerizes. Expressed in brain at all developmental stages. Detected in hippocampus, hypothalamus, cerebellum, cortex, olfactory bulb, and the ventral and dorsal anterior olfactory nucleus.

Its subcellular location is the endoplasmic reticulum membrane. It catalyses the reaction acetyl-CoA(in) = acetyl-CoA(out). Functionally, acetyl-CoA transporter that mediates active acetyl-CoA import through the endoplasmic reticulum (ER) membrane into the ER lumen where specific ER-based acetyl-CoA:lysine acetyltransferases are responsible for the acetylation of ER-based protein substrates, such as BACE1. Necessary for O-acetylation of gangliosides. The sequence is that of Acetyl-coenzyme A transporter 1 (Slc33a1) from Rattus norvegicus (Rat).